The primary structure comprises 343 residues: D-erythrose-4-phosphate dehydrogenase (343 aa).

12–13 (RI) lines the NAD(+) pocket. Substrate is bound by residues 154 to 156 (SCT), Arg-200, 213 to 214 (TK), and Arg-236. Cys-155 serves as the catalytic Nucleophile. Residue Asn-318 coordinates NAD(+).

Belongs to the glyceraldehyde-3-phosphate dehydrogenase family. Epd subfamily. As to quaternary structure, homotetramer.

The protein resides in the cytoplasm. The enzyme catalyses D-erythrose 4-phosphate + NAD(+) + H2O = 4-phospho-D-erythronate + NADH + 2 H(+). Its pathway is cofactor biosynthesis; pyridoxine 5'-phosphate biosynthesis; pyridoxine 5'-phosphate from D-erythrose 4-phosphate: step 1/5. Catalyzes the NAD-dependent conversion of D-erythrose 4-phosphate to 4-phosphoerythronate. The sequence is that of D-erythrose-4-phosphate dehydrogenase from Pseudoalteromonas translucida (strain TAC 125).